Here is a 519-residue protein sequence, read N- to C-terminus: Sensor protein RprX (519 aa).

Transmembrane regions (helical) follow at residues 5–25 (TIWI…YLQV) and 260–280 (IPSM…IYIV). The region spanning 296–517 (NMTHEFKTPI…KFIIALPLLK (222 aa)) is the Histidine kinase domain. Residue H299 is modified to Phosphohistidine; by autocatalysis.

It is found in the cell membrane. It carries out the reaction ATP + protein L-histidine = ADP + protein N-phospho-L-histidine.. Member of the two-component regulatory system RprX/RprY. May activate RprY by phosphorylation. The chain is Sensor protein RprX (rprX) from Bacteroides fragilis (strain YCH46).